The sequence spans 248 residues: DNA repair protein RecO (248 aa).

The protein belongs to the RecO family.

Its function is as follows. Involved in DNA repair and RecF pathway recombination. The chain is DNA repair protein RecO from Bacillus mycoides (strain KBAB4) (Bacillus weihenstephanensis).